The sequence spans 622 residues: Chaperone protein HscA homolog (622 aa).

Belongs to the heat shock protein 70 family.

Its function is as follows. Chaperone involved in the maturation of iron-sulfur cluster-containing proteins. Has a low intrinsic ATPase activity which is markedly stimulated by HscB. The polypeptide is Chaperone protein HscA homolog (Burkholderia multivorans (strain ATCC 17616 / 249)).